The chain runs to 373 residues: Queuine tRNA-ribosyltransferase accessory subunit 2 (373 aa).

Positions 320, 322, 325, and 351 each coordinate Zn(2+).

The protein belongs to the queuine tRNA-ribosyltransferase family. QTRT2 subfamily. As to quaternary structure, heterodimer of a catalytic subunit and an accessory subunit. It depends on Zn(2+) as a cofactor.

Its subcellular location is the cytoplasm. In terms of biological role, non-catalytic subunit of the queuine tRNA-ribosyltransferase (TGT) that catalyzes the base-exchange of a guanine (G) residue with queuine (Q) at position 34 (anticodon wobble position) in tRNAs with GU(N) anticodons (tRNA-Asp, -Asn, -His and -Tyr), resulting in the hypermodified nucleoside queuosine (7-(((4,5-cis-dihydroxy-2-cyclopenten-1-yl)amino)methyl)-7-deazaguanosine). The chain is Queuine tRNA-ribosyltransferase accessory subunit 2 from Caenorhabditis elegans.